The following is a 117-amino-acid chain: Large ribosomal subunit protein uL18 (117 aa).

It belongs to the universal ribosomal protein uL18 family. Part of the 50S ribosomal subunit; part of the 5S rRNA/L5/L18/L25 subcomplex. Contacts the 5S and 23S rRNAs.

Its function is as follows. This is one of the proteins that bind and probably mediate the attachment of the 5S RNA into the large ribosomal subunit, where it forms part of the central protuberance. This chain is Large ribosomal subunit protein uL18, found in Edwardsiella ictaluri (strain 93-146).